The sequence spans 143 residues: Large ribosomal subunit protein uL13 (143 aa).

Belongs to the universal ribosomal protein uL13 family. In terms of assembly, part of the 50S ribosomal subunit.

This protein is one of the early assembly proteins of the 50S ribosomal subunit, although it is not seen to bind rRNA by itself. It is important during the early stages of 50S assembly. The sequence is that of Large ribosomal subunit protein uL13 from Dehalococcoides mccartyi (strain CBDB1).